A 106-amino-acid polypeptide reads, in one-letter code: UPF0145 protein PFL_3418 (106 aa).

Belongs to the UPF0145 family.

This is UPF0145 protein PFL_3418 from Pseudomonas fluorescens (strain ATCC BAA-477 / NRRL B-23932 / Pf-5).